The primary structure comprises 165 residues: Crossover junction endodeoxyribonuclease RuvC (165 aa).

Active-site residues include D7, E67, and D140. Residues D7, E67, and D140 each contribute to the Mg(2+) site.

This sequence belongs to the RuvC family. As to quaternary structure, homodimer which binds Holliday junction (HJ) DNA. The HJ becomes 2-fold symmetrical on binding to RuvC with unstacked arms; it has a different conformation from HJ DNA in complex with RuvA. In the full resolvosome a probable DNA-RuvA(4)-RuvB(12)-RuvC(2) complex forms which resolves the HJ. It depends on Mg(2+) as a cofactor.

The protein localises to the cytoplasm. The catalysed reaction is Endonucleolytic cleavage at a junction such as a reciprocal single-stranded crossover between two homologous DNA duplexes (Holliday junction).. Functionally, the RuvA-RuvB-RuvC complex processes Holliday junction (HJ) DNA during genetic recombination and DNA repair. Endonuclease that resolves HJ intermediates. Cleaves cruciform DNA by making single-stranded nicks across the HJ at symmetrical positions within the homologous arms, yielding a 5'-phosphate and a 3'-hydroxyl group; requires a central core of homology in the junction. The consensus cleavage sequence is 5'-(A/T)TT(C/G)-3'. Cleavage occurs on the 3'-side of the TT dinucleotide at the point of strand exchange. HJ branch migration catalyzed by RuvA-RuvB allows RuvC to scan DNA until it finds its consensus sequence, where it cleaves and resolves the cruciform DNA. This Dehalococcoides mccartyi (strain ATCC BAA-2266 / KCTC 15142 / 195) (Dehalococcoides ethenogenes (strain 195)) protein is Crossover junction endodeoxyribonuclease RuvC.